A 149-amino-acid polypeptide reads, in one-letter code: Large ribosomal subunit protein bL9 (149 aa).

It belongs to the bacterial ribosomal protein bL9 family.

In terms of biological role, binds to the 23S rRNA. This is Large ribosomal subunit protein bL9 from Helicobacter acinonychis (strain Sheeba).